Consider the following 475-residue polypeptide: F-box protein At3g59150 (475 aa).

One can recognise an F-box domain in the interval 12–58 (GDVISNLPNDLLCRILSYLSTKEAALTSILSKRWSNLLLSIPILDFD).

This is F-box protein At3g59150 from Arabidopsis thaliana (Mouse-ear cress).